The following is a 328-amino-acid chain: DNA-directed RNA polymerase subunit alpha (328 aa).

Residues 1 to 232 (MSTQGFLKPR…DQISVFAALE (232 aa)) are alpha N-terminal domain (alpha-NTD). The tract at residues 248 to 328 (IDPVLLRPVD…NWPPLGLERP (81 aa)) is alpha C-terminal domain (alpha-CTD).

The protein belongs to the RNA polymerase alpha chain family. As to quaternary structure, homodimer. The RNAP catalytic core consists of 2 alpha, 1 beta, 1 beta' and 1 omega subunit. When a sigma factor is associated with the core the holoenzyme is formed, which can initiate transcription.

It carries out the reaction RNA(n) + a ribonucleoside 5'-triphosphate = RNA(n+1) + diphosphate. In terms of biological role, DNA-dependent RNA polymerase catalyzes the transcription of DNA into RNA using the four ribonucleoside triphosphates as substrates. In Bordetella avium (strain 197N), this protein is DNA-directed RNA polymerase subunit alpha.